A 241-amino-acid polypeptide reads, in one-letter code: GLIPR1-like protein 1 (241 aa).

The first 22 residues, 1 to 22 (MILRKKLSYLWTLGLCLVASKS), serve as a signal peptide directing secretion. The SCP domain occupies 39–172 (LRLHNEARTN…PDSALLVCNY (134 aa)). The GPI-anchor amidated serine moiety is linked to residue S220. Residues 221–241 (GTRQLIACNPLYLISVLLTIF) constitute a propeptide, removed in mature form.

It belongs to the CRISP family. As to quaternary structure, part of a oolemmal binding multimeric complex (IZUMO1 complex) composed at least of IZUMO1 and GLIPR1L1; the complex assemblage is influenced by the maturation status of the male germ cell. Interacts with IZUMO1. Post-translationally, N-glycosylated. N-glycosylation decreases during the transit in the caput. In terms of tissue distribution, highly expressed in testis, where it localizes to round and elongating spermatids and differentiated spermatozoa in the seminiferous tubules and epididymis (at protein level).

The protein resides in the cytoplasmic vesicle. It localises to the secretory vesicle. Its subcellular location is the acrosome. It is found in the cell membrane. The protein localises to the membrane raft. Its function is as follows. Required for optimal fertilization at the stage of sperm-oocyte fusion, plays a role in optimizing acrosome function, the translocation of IZUMO1 during the acrosome reaction and the fertilization process. Component of epididymosomes, one type of membranous microvesicules which mediate the transfer of lipids and proteins to spermatozoa plasma membrane during epididymal maturation. Also a component of the CD9-positive microvesicules found in the cauda region. The polypeptide is GLIPR1-like protein 1 (Bos taurus (Bovine)).